We begin with the raw amino-acid sequence, 312 residues long: Expansin-A24 (312 aa).

The first 27 residues, 1 to 27, serve as a signal peptide directing secretion; that stretch reads MELLKRKLYAKILMMVMVIWIAPMTNG. Positions 31 to 86 are disordered; that stretch reads ASHVPGGRPGAHPSHGAHPAHGAHPSHGAHPSHGAHPSHGAHPSHGALPSHGGQVP. Low complexity predominate over residues 40-77; sequence GAHPSHGAHPAHGAHPSHGAHPSHGAHPSHGAHPSHGA. A run of 6 repeats spans residues 42 to 47, 48 to 53, 54 to 59, 60 to 65, 66 to 71, and 72 to 77. Residues 42–77 are 6 X 6 AA tandem repeats of H-P-S-H-G-A; that stretch reads HPSHGAHPAHGAHPSHGAHPSHGAHPSHGAHPSHGA. An Expansin-like EG45 domain is found at 108–218; that stretch reads QGACGYGDLH…RRVPCAKIGG (111 aa). The Expansin-like CBD domain occupies 228-307; sequence HFLMILPYNV…DWKCNGQSFD (80 aa).

This sequence belongs to the expansin family. Expansin A subfamily.

It localises to the secreted. The protein localises to the cell wall. It is found in the membrane. Causes loosening and extension of plant cell walls by disrupting non-covalent bonding between cellulose microfibrils and matrix glucans. No enzymatic activity has been found. This Arabidopsis thaliana (Mouse-ear cress) protein is Expansin-A24 (EXPA24).